Here is a 104-residue protein sequence, read N- to C-terminus: Large ribosomal subunit protein bL21 (104 aa).

This sequence belongs to the bacterial ribosomal protein bL21 family. As to quaternary structure, part of the 50S ribosomal subunit. Contacts protein L20.

Its function is as follows. This protein binds to 23S rRNA in the presence of protein L20. This is Large ribosomal subunit protein bL21 from Thermotoga petrophila (strain ATCC BAA-488 / DSM 13995 / JCM 10881 / RKU-1).